The sequence spans 500 residues: Maturase K (500 aa).

This sequence belongs to the intron maturase 2 family. MatK subfamily.

It is found in the plastid. It localises to the chloroplast. Usually encoded in the trnK tRNA gene intron. Probably assists in splicing its own and other chloroplast group II introns. This is Maturase K from Argentina anserina (Silverweed cinquefoil).